The primary structure comprises 419 residues: Phospholipase A1-IIgamma (419 aa).

Coiled coils occupy residues M1–K21 and N207–E227. S236 acts as the Acyl-ester intermediate in catalysis. Catalysis depends on charge relay system residues S236, D302, and H339.

It belongs to the AB hydrolase superfamily. Lipase family. In terms of tissue distribution, expressed in seedlings, stems and siliques, and, to a lower extent, in flowers.

Its subcellular location is the cytoplasm. Its function is as follows. Acylhydrolase that catalyzes the hydrolysis of 1,3-diacylglycerol (1,3-DAG) and 1-monoacylglycerol (1-MAG) at the sn-1 position. High activity toward 1,3-DAG and 1-MAG, but low activity toward 1,2-diacylglycerol (1,2-DAG) and 1-lysophosphatidylcholine (1-LPC), and no activity toward phosphatidylcholine (PC), monogalactosyldiacylglycerol (MGDG), digalactosyldiacylglycerol (DGDG), triacylglycerol (TAG) and 2-monoacylglycerol (2-MAG). May be involved in the negative regulation of seedling establishment by inhibiting the breakdown, beta-oxidation and mobilization of seed storage oils. The sequence is that of Phospholipase A1-IIgamma (DSEL) from Arabidopsis thaliana (Mouse-ear cress).